A 366-amino-acid polypeptide reads, in one-letter code: Endogenous Bornavirus-like nucleoprotein 1 (366 aa).

Polar residues predominate over residues 1 to 15 (MSRPRNNPQTSSPQD). A disordered region spans residues 1-22 (MSRPRNNPQTSSPQDSTKDGSS).

As to expression, expression detected by RT-PCR in a few cell lines, including OL, HEK293T and MOLT-4. Not observed in HeLa cells.

May act as an RNA-binding protein. Highly homologous to the bornavirus nucleocapsid N protein that binds viral RNA and oligomerizes. The sequence is that of Endogenous Bornavirus-like nucleoprotein 1 (EBLN1) from Homo sapiens (Human).